A 684-amino-acid polypeptide reads, in one-letter code: Transcriptional regulatory protein RCO1 (684 aa).

Met-1 carries the post-translational modification N-acetylmethionine. The tract at residues 1 to 48 (MDTSKKDTTRSPSHSNSSSPSSSSLSSSSSKEKKRPKRLSSQNVNYDL) is disordered. Residues 10-29 (RSPSHSNSSSPSSSSLSSSS) show a composition bias toward low complexity. Ser-68 is modified (phosphoserine). The PHD-type 1 zinc-finger motif lies at 260 to 309 (EDFCSACNQSGSFLCCDTCPKSFHFLCLDPPIDPNNLPKGDWHCNECKFK). Residues 414 to 472 (FLICYKCNQTRLGSWSHPENSRLIMTCDYCQTPWHLDCVPRASFKNLGSKWKCPLHSPT) form a PHD-type 2; atypical zinc finger. Ser-683 carries the phosphoserine modification.

As to quaternary structure, component of the RPD3C(S) complex composed of at least EAF3, RCO1, RPD3, SIN3, and UME1.

It is found in the nucleus. Its function is as follows. Catalytic component of the RPD3C(S) histone deacetylase complex responsible for the deacetylation of lysine residues on the N-terminal part of the core histones (H2A, H2B, H3 and H4). Histone deacetylation gives a tag for epigenetic repression and plays an important role in transcriptional regulation, cell cycle progression, DNA damage response, osmotic stress response and developmental events. In Saccharomyces cerevisiae (strain ATCC 204508 / S288c) (Baker's yeast), this protein is Transcriptional regulatory protein RCO1 (RCO1).